A 178-amino-acid chain; its full sequence is CDP-archaeol synthase (178 aa).

5 helical membrane passes run 3-23 (LLLL…ANAV), 56-76 (FFGI…VILY), 91-111 (IILG…GSFI), 123-143 (APLL…YPLY), and 149-169 (LMVI…IIAY).

It belongs to the CDP-archaeol synthase family. It depends on Mg(2+) as a cofactor.

The protein resides in the cell membrane. The catalysed reaction is 2,3-bis-O-(geranylgeranyl)-sn-glycerol 1-phosphate + CTP + H(+) = CDP-2,3-bis-O-(geranylgeranyl)-sn-glycerol + diphosphate. It participates in membrane lipid metabolism; glycerophospholipid metabolism. Functionally, catalyzes the formation of CDP-2,3-bis-(O-geranylgeranyl)-sn-glycerol (CDP-archaeol) from 2,3-bis-(O-geranylgeranyl)-sn-glycerol 1-phosphate (DGGGP) and CTP. This reaction is the third ether-bond-formation step in the biosynthesis of archaeal membrane lipids. This is CDP-archaeol synthase from Methanococcus maripaludis (strain C7 / ATCC BAA-1331).